Reading from the N-terminus, the 269-residue chain is Troponin I (269 aa).

Residues 1 to 104 (MADDEKKAAA…AKKGFMTPER (104 aa)) form a disordered region. An N-acetylalanine modification is found at A2. Over residues 9-50 (AAPAAAPAAAAKPAAPAAAPAANGKAAPAANGKAAPAAAAAP) the composition is skewed to low complexity. A compositionally biased stretch (basic and acidic residues) spans 56–91 (DPNDPKVKAEEAKKAKQAEIERKRAEVRKRMEEASK). Positions 162-171 (ERMYICEGQK) are troponin T-interaction. The segment at 189–202 (NAQVNDLRGKFVKP) is actin-binding. N6,N6,N6-trimethyllysine occurs at positions 201 and 205. The tract at residues 239–269 (TLEEEEKEKKPDWSKGKPGDAKVKEEVEAEA) is disordered.

It belongs to the troponin I family. In terms of assembly, binds to actin and tropomyosin. All isoforms are expressed in somatic muscle. Isoforms containing exon 6a1 (isoforms 1 and 2) are expressed in all muscles but highest expression is in abdominal muscle and splanchnic muscle of the gut. Isoforms containing exon 6b1 (isoforms 5, 6, 9 and 10) are highly expressed in the tergal depressor of trochanter (TDT) muscle.

Functionally, troponin I is the ATPase inhibitory subunit of troponin in the thin filament regulatory complex. Involved in the development and maintenance of muscle and nervous system. May also be involved in the cytoskeletal apparatus. This is Troponin I (wupA) from Drosophila melanogaster (Fruit fly).